A 71-amino-acid polypeptide reads, in one-letter code: MAILKASEIRELSVEEMKGKIAELKRELMKEGVNKSTGGAPSNPGKISETKRTIARILTIMKEKEAQAENA.

The disordered stretch occupies residues 32–51; it reads GVNKSTGGAPSNPGKISETK.

The protein belongs to the universal ribosomal protein uL29 family.

The chain is Large ribosomal subunit protein uL29 from Methanococcus maripaludis (strain DSM 14266 / JCM 13030 / NBRC 101832 / S2 / LL).